A 161-amino-acid chain; its full sequence is NADH-quinone oxidoreductase subunit I (161 aa).

4Fe-4S ferredoxin-type domains are found at residues 52 to 82 (LRRYPDGEERCIACKLCEAICPAQAITIEAK) and 92 to 121 (TKYDIDMTKCIYCGLCQEACPVDAIVEGPN). 8 residues coordinate [4Fe-4S] cluster: C62, C65, C68, C72, C101, C104, C107, and C111.

This sequence belongs to the complex I 23 kDa subunit family. NDH-1 is composed of 14 different subunits. Subunits NuoA, H, J, K, L, M, N constitute the membrane sector of the complex. Requires [4Fe-4S] cluster as cofactor.

It localises to the cell inner membrane. The catalysed reaction is a quinone + NADH + 5 H(+)(in) = a quinol + NAD(+) + 4 H(+)(out). Its function is as follows. NDH-1 shuttles electrons from NADH, via FMN and iron-sulfur (Fe-S) centers, to quinones in the respiratory chain. The immediate electron acceptor for the enzyme in this species is believed to be ubiquinone. Couples the redox reaction to proton translocation (for every two electrons transferred, four hydrogen ions are translocated across the cytoplasmic membrane), and thus conserves the redox energy in a proton gradient. The sequence is that of NADH-quinone oxidoreductase subunit I from Orientia tsutsugamushi (strain Boryong) (Rickettsia tsutsugamushi).